Reading from the N-terminus, the 106-residue chain is Large ribosomal subunit protein uL24 (106 aa).

The segment covering 84–97 (EKIGRELGAKEKAR) has biased composition (basic and acidic residues). The segment at 84–106 (EKIGRELGAKEKARLQKRKAAAK) is disordered.

The protein belongs to the universal ribosomal protein uL24 family. As to quaternary structure, part of the 50S ribosomal subunit.

In terms of biological role, one of two assembly initiator proteins, it binds directly to the 5'-end of the 23S rRNA, where it nucleates assembly of the 50S subunit. Functionally, one of the proteins that surrounds the polypeptide exit tunnel on the outside of the subunit. The chain is Large ribosomal subunit protein uL24 from Anaeromyxobacter sp. (strain K).